Consider the following 500-residue polypeptide: Bifunctional protein GlmU (500 aa).

Residues 1 to 242 (MPVQTAVVVL…SAKVAGANDR (242 aa)) form a pyrophosphorylase region. Residues 10–13 (LAAG), Lys-24, Gln-81, and 86–87 (GT) each bind UDP-N-acetyl-alpha-D-glucosamine. Asp-112 provides a ligand contact to Mg(2+). The UDP-N-acetyl-alpha-D-glucosamine site is built by Gly-151, Glu-167, Asn-182, and Asn-240. Asn-240 lines the Mg(2+) pocket. Residues 243 to 263 (VQLSRLAAELNRRTVENWMRA) are linker. An N-acetyltransferase region spans residues 264 to 500 (GVTVVDPSTT…KQDLKDGIEQ (237 aa)). The UDP-N-acetyl-alpha-D-glucosamine site is built by Arg-345 and Lys-363. His-375 serves as the catalytic Proton acceptor. Positions 378 and 389 each coordinate UDP-N-acetyl-alpha-D-glucosamine. Acetyl-CoA is bound by residues Ala-392, 398 to 399 (NY), Ser-417, and Ala-435. Residues 459 to 500 (DGWVQRNRPGTPAAEAASAAGPHHSSDLHETEKQDLKDGIEQ) form a disordered region. Basic and acidic residues predominate over residues 482-500 (HSSDLHETEKQDLKDGIEQ).

The protein in the N-terminal section; belongs to the N-acetylglucosamine-1-phosphate uridyltransferase family. In the C-terminal section; belongs to the transferase hexapeptide repeat family. Homotrimer. The cofactor is Mg(2+).

It localises to the cytoplasm. The catalysed reaction is alpha-D-glucosamine 1-phosphate + acetyl-CoA = N-acetyl-alpha-D-glucosamine 1-phosphate + CoA + H(+). The enzyme catalyses N-acetyl-alpha-D-glucosamine 1-phosphate + UTP + H(+) = UDP-N-acetyl-alpha-D-glucosamine + diphosphate. The protein operates within nucleotide-sugar biosynthesis; UDP-N-acetyl-alpha-D-glucosamine biosynthesis; N-acetyl-alpha-D-glucosamine 1-phosphate from alpha-D-glucosamine 6-phosphate (route II): step 2/2. It participates in nucleotide-sugar biosynthesis; UDP-N-acetyl-alpha-D-glucosamine biosynthesis; UDP-N-acetyl-alpha-D-glucosamine from N-acetyl-alpha-D-glucosamine 1-phosphate: step 1/1. It functions in the pathway bacterial outer membrane biogenesis; LPS lipid A biosynthesis. Catalyzes the last two sequential reactions in the de novo biosynthetic pathway for UDP-N-acetylglucosamine (UDP-GlcNAc). The C-terminal domain catalyzes the transfer of acetyl group from acetyl coenzyme A to glucosamine-1-phosphate (GlcN-1-P) to produce N-acetylglucosamine-1-phosphate (GlcNAc-1-P), which is converted into UDP-GlcNAc by the transfer of uridine 5-monophosphate (from uridine 5-triphosphate), a reaction catalyzed by the N-terminal domain. The sequence is that of Bifunctional protein GlmU from Rhodococcus opacus (strain B4).